The chain runs to 245 residues: tRNA pseudouridine synthase A (245 aa).

The active-site Nucleophile is D52. Substrate is bound at residue Y112.

This sequence belongs to the tRNA pseudouridine synthase TruA family. In terms of assembly, homodimer.

The catalysed reaction is uridine(38/39/40) in tRNA = pseudouridine(38/39/40) in tRNA. Its function is as follows. Formation of pseudouridine at positions 38, 39 and 40 in the anticodon stem and loop of transfer RNAs. The polypeptide is tRNA pseudouridine synthase A (Dictyoglomus turgidum (strain DSM 6724 / Z-1310)).